The sequence spans 1499 residues: Rap guanine nucleotide exchange factor 2 (1499 aa).

2 disordered regions span residues 40–59 (HVSSSHSGCSITSDSGSSSL) and 68–101 (SEAGDMDLSGLPETAVDSEDDDDEEDIERASDPL). Residues 83 to 94 (VDSEDDDDEEDI) show a composition bias toward acidic residues. A nucleoside 3',5'-cyclic phosphate is bound at residue 135-254 (AFANMTMSVR…VEEEGEIVMV (120 aa)). The N-terminal Ras-GEF domain occupies 267 to 380 (KGHIVIKGTS…RLLNIACAAK (114 aa)). One can recognise a PDZ domain in the interval 385 to 470 (LMTLTKPSRE…ITVKTNLFVF (86 aa)). Residue Ser-501 is modified to Phosphoserine. A Ras-associating domain is found at 606–692 (PDQVLRVFKA…GRYYLKNNME (87 aa)). Thr-644 bears the Phosphothreonine; by PLK2 mark. The Ras-GEF domain maps to 717-944 (STVEVATQLS…SQGSTNATVL (228 aa)). At Ser-806 the chain carries Phosphoserine; by PLK2. Phosphoserine is present on Ser-930. Ser-933 is modified (phosphoserine; by PLK2). The interval 1002-1050 (PATNTLPKNPGDKKPVKSETSPVAPRAGSQQKAQSLPQPQQQPPPAHKI) is disordered. The residue at position 1022 (Ser-1022) is a Phosphoserine. Positions 1031 to 1040 (QQKAQSLPQP) are enriched in low complexity. Residues Ser-1080, Ser-1089, Ser-1095, Ser-1116, Ser-1120, and Ser-1159 each carry the phosphoserine modification. The interval 1095–1160 (SLERHKKQAE…RSSIVSNSSF (66 aa)) is disordered. Low complexity-rich tracts occupy residues 1111–1125 (SSQLSSPPTSPQSSP) and 1141–1160 (SDSGHSEISSRSSIVSNSSF). Ser-1176 bears the Phosphoserine; by PLK2 mark. 2 disordered regions span residues 1224–1256 (PSTEELSQDQGDRASLDAADSGRGSWTSCSSGS) and 1305–1499 (TKYN…VSAV). 2 stretches are compositionally biased toward polar residues: residues 1247–1256 (GSWTSCSSGS) and 1307–1331 (YNRQNQSRESLEQAQSRASWASSTG). Residues 1355 to 1366 (EAESSSLTSVTT) show a composition bias toward low complexity. The span at 1441-1462 (SSDTAGPSSVQQPHGHPTSSRP) shows a compositional bias: polar residues. Acidic residues predominate over residues 1488–1499 (TEEDEDEQVSAV).

It belongs to the RAPGEF2 family. In terms of assembly, interacts with CDH1, CTNNB1 and TJP1. Interacts (via C-terminal domain) with MAGI2 (via PDZ and WW domains); the interaction occurs before or after NGF stimulation. Interacts with KIDINS220 and NTRK1; the interactions occur after NGF stimulation. Found in a complex, at least composed of KIDINS220, MAGI2, NTRK1 and RAPGEF2; the complex is mainly formed at late endosomes in a neuronal growth factor (NGF)-dependent manner. Interacts (via C-terminal domain) with NEDD4 (via WW domains); this interaction leads to ubiquitination and degradation via the proteasome pathway in a cAMP-independent manner. Interacts with MAGI1 isoform 3 (via PDZ domain). Interacts with ADRB1 (via C-terminal PDZ motif); the interaction is direct. Interacts (via Ras-associating domain) with RAP1A (via GTP-bound active form). Interacts weakly with HRAS (via GDP- and GTP-bound forms). Interacts (via C-terminal domain) with MAGI2 (via PDZ and WW domains). Ubiquitinated by NEDD4, leading to proteasomal degradation. Post-translationally, phosphorylation by PLK2 promotes its activity. In terms of tissue distribution, expressed in primary neuronal and endocrine cells (at protein level). Highest expression levels in brain. Lower expression levels in heart, kidney, lung, placenta and blood leukocytes.

It is found in the cytoplasm. It localises to the perinuclear region. Its subcellular location is the cell membrane. The protein resides in the late endosome. The protein localises to the cell junction. In terms of biological role, functions as a guanine nucleotide exchange factor (GEF), which activates Rap and Ras family of small GTPases by exchanging bound GDP for free GTP in a cAMP-dependent manner. Serves as a link between cell surface receptors and Rap/Ras GTPases in intracellular signaling cascades. Also acts as an effector for Rap1 by direct association with Rap1-GTP thereby leading to the amplification of Rap1-mediated signaling. Shows weak activity on HRAS. It is controversial whether RAPGEF2 binds cAMP and cGMP or not. Its binding to ligand-activated beta-1 adrenergic receptor ADRB1 leads to the Ras activation through the G(s)-alpha signaling pathway. Involved in the cAMP-induced Ras and Erk1/2 signaling pathway that leads to sustained inhibition of long term melanogenesis by reducing dendrite extension and melanin synthesis. Also provides inhibitory signals for cell proliferation of melanoma cells and promotes their apoptosis in a cAMP-independent nanner. Regulates cAMP-induced neuritogenesis by mediating the Rap1/B-Raf/ERK signaling through a pathway that is independent on both PKA and RAPGEF3/RAPGEF4. Involved in neuron migration and in the formation of the major forebrain fiber connections forming the corpus callosum, the anterior commissure and the hippocampal commissure during brain development. Involved in neuronal growth factor (NGF)-induced sustained activation of Rap1 at late endosomes and in brain-derived neurotrophic factor (BDNF)-induced axon outgrowth of hippocampal neurons. Plays a role in the regulation of embryonic blood vessel formation and in the establishment of basal junction integrity and endothelial barrier function. May be involved in the regulation of the vascular endothelial growth factor receptor KDR and cadherin CDH5 expression at allantois endothelial cell-cell junctions. In Homo sapiens (Human), this protein is Rap guanine nucleotide exchange factor 2 (RAPGEF2).